Reading from the N-terminus, the 354-residue chain is S-adenosylmethionine:tRNA ribosyltransferase-isomerase (354 aa).

It belongs to the QueA family. In terms of assembly, monomer.

The protein localises to the cytoplasm. The enzyme catalyses 7-aminomethyl-7-carbaguanosine(34) in tRNA + S-adenosyl-L-methionine = epoxyqueuosine(34) in tRNA + adenine + L-methionine + 2 H(+). The protein operates within tRNA modification; tRNA-queuosine biosynthesis. In terms of biological role, transfers and isomerizes the ribose moiety from AdoMet to the 7-aminomethyl group of 7-deazaguanine (preQ1-tRNA) to give epoxyqueuosine (oQ-tRNA). This chain is S-adenosylmethionine:tRNA ribosyltransferase-isomerase, found in Salmonella paratyphi C (strain RKS4594).